The primary structure comprises 122 residues: MARIAGVDLPKNKRMEIALTYIYGIGRTKAKEILEKAEISFDTKTDELADSEINAIRTIIDRDHKVEGDLRRDISMSIKRLMDVGAYRGLRHRKGLPVRGQRTHTNARTRKGPRRAIAGKKK.

The interval 94–122 (KGLPVRGQRTHTNARTRKGPRRAIAGKKK) is disordered.

It belongs to the universal ribosomal protein uS13 family. As to quaternary structure, part of the 30S ribosomal subunit. Forms a loose heterodimer with protein S19. Forms two bridges to the 50S subunit in the 70S ribosome.

Located at the top of the head of the 30S subunit, it contacts several helices of the 16S rRNA. In the 70S ribosome it contacts the 23S rRNA (bridge B1a) and protein L5 of the 50S subunit (bridge B1b), connecting the 2 subunits; these bridges are implicated in subunit movement. Contacts the tRNAs in the A and P-sites. The chain is Small ribosomal subunit protein uS13 from Syntrophus aciditrophicus (strain SB).